We begin with the raw amino-acid sequence, 651 residues long: Probable potassium transport system protein Kup (651 aa).

12 helical membrane passes run 41 to 61 (LVLG…IYAF), 82 to 102 (VVSL…VLFV), 130 to 150 (LILG…VITP), 163 to 183 (IVAP…LVTL), 194 to 214 (VAIV…ASGL), 235 to 255 (FLTV…LAMT), 276 to 296 (WLWI…AFIL), 309 to 329 (MIPS…TVIA), 366 to 386 (IYIP…VLGF), 395 to 415 (AYGI…YIVM), 426 to 446 (ALPI…ANII), and 450 to 470 (EGGW…WTWV).

This sequence belongs to the HAK/KUP transporter (TC 2.A.72) family.

It localises to the cell inner membrane. The catalysed reaction is K(+)(in) + H(+)(in) = K(+)(out) + H(+)(out). Functionally, transport of potassium into the cell. Likely operates as a K(+):H(+) symporter. This chain is Probable potassium transport system protein Kup, found in Brucella melitensis biotype 1 (strain ATCC 23456 / CCUG 17765 / NCTC 10094 / 16M).